A 661-amino-acid polypeptide reads, in one-letter code: Pentatricopeptide repeat-containing protein At5g66631 (661 aa).

PPR repeat units lie at residues 139 to 173 (VHFS…GEEK), 176 to 210 (CTES…GGIP), 211 to 245 (NSRT…RITR), 246 to 280 (TLKH…GKFP), 410 to 444 (DAYT…GIKL), 445 to 475 (PFST…DRTL), 484 to 518 (LMLL…GVSP), 519 to 553 (DIQT…GLEP), and 554 to 588 (DPYM…NLMP).

Belongs to the PPR family. P subfamily.

This Arabidopsis thaliana (Mouse-ear cress) protein is Pentatricopeptide repeat-containing protein At5g66631.